We begin with the raw amino-acid sequence, 461 residues long: Steroidogenic factor 1 (461 aa).

The nuclear receptor DNA-binding region spans 10–85 (DELCPVCGDK…VGMRLEAVRA (76 aa)). The segment at 13–33 (CPVCGDKVSGYHYGLLTCESC) adopts an NR C4-type zinc-finger fold. N6-acetyllysine is present on residues Lys34, Lys38, and Lys72. Residues 49–73 (CTESQSCKIDKTQRKRCPFCRFQKC) form an NR C4-type zinc finger. Positions 116 to 158 (NGFKLETGPPVGVPPPPPPPPDYMLPHGLHASEPKGLASGPPA) are disordered. Residue Lys119 forms a Glycyl lysine isopeptide (Lys-Gly) (interchain with G-Cter in SUMO) linkage. The span at 126-138 (VGVPPPPPPPPDY) shows a compositional bias: pro residues. Lys194 is covalently cross-linked (Glycyl lysine isopeptide (Lys-Gly) (interchain with G-Cter in SUMO)). Ser203 is modified (phosphoserine; by CDK7). Residues 222–459 (GVPELILQLL…NLLIEMLQAK (238 aa)) form the NR LBD domain. Residues 230 to 461 (LLQLEPDEDQ…LIEMLQAKQT (232 aa)) are important for dimerization. A 1,2-diacyl-sn-glycero-3-phosphocholine is bound by residues Gly341, Tyr436, and Lys440.

It belongs to the nuclear hormone receptor family. NR5 subfamily. Binds DNA as a monomer. Part of a complex consisting of SFPQ, NONO and NR5A1. Interacts with NR0B2. Interacts with DGKQ and CDK7. Binds to and activated by HIPK3. Post-translationally, may be regulated by phosphorylation and dephosphorylation. In terms of processing, acetylation stimulates the transcriptional activity. Sumoylation reduces CDK7-mediated phosphorylation on Ser-203. Post-translationally, phosphorylated on Ser-203 by CDK7. This phosphorylation promotes transcriptional activity. Adrenal, ovary, testis, placenta, adipocyte, and brain.

It localises to the nucleus. Functionally, transcriptional activator. Seems to be essential for sexual differentiation and formation of the primary steroidogenic tissues. Binds to the Ad4 site found in the promoter region of steroidogenic P450 genes such as CYP11A, CYP11B and CYP21B. Also regulates the AMH/Muellerian inhibiting substance gene as well as the AHCH and STAR genes. 5'-YCAAGGYC-3' and 5'-RRAGGTCA-3' are the consensus sequences for the recognition by NR5A1. The SFPQ-NONO-NR5A1 complex binds to the CYP17 promoter and regulates basal and cAMP-dependent transcriptional activity. Binds phospholipids with a phosphatidylinositol (PI) headgroup, in particular PI(3,4)P2 and PI(3,4,5)P3. Activated by the phosphorylation of NR5A1 by HIPK3 leading to increased steroidogenic gene expression upon cAMP signaling pathway stimulation. This chain is Steroidogenic factor 1 (NR5A1), found in Bos taurus (Bovine).